Reading from the N-terminus, the 132-residue chain is Small ribosomal subunit protein bS6 (132 aa).

Positions 99 to 132 (ASPMVKAKDERRGDRREDFANETADDADAGDSEE) are disordered. Residues 104-117 (KAKDERRGDRREDF) are compositionally biased toward basic and acidic residues. Residues 121–132 (TADDADAGDSEE) are compositionally biased toward acidic residues.

It belongs to the bacterial ribosomal protein bS6 family.

Functionally, binds together with bS18 to 16S ribosomal RNA. In Serratia proteamaculans (strain 568), this protein is Small ribosomal subunit protein bS6.